A 371-amino-acid polypeptide reads, in one-letter code: Queuine tRNA-ribosyltransferase (371 aa).

The active-site Proton acceptor is the Asp-90. Residues 90-94 (DSGGF), Asp-144, Gln-188, and Gly-215 contribute to the substrate site. The RNA binding stretch occupies residues 246–252 (GVGTPED). Catalysis depends on Asp-265, which acts as the Nucleophile. The RNA binding; important for wobble base 34 recognition stretch occupies residues 270–274 (TRNAR). Positions 303, 305, 308, and 334 each coordinate Zn(2+).

This sequence belongs to the queuine tRNA-ribosyltransferase family. Homodimer. Within each dimer, one monomer is responsible for RNA recognition and catalysis, while the other monomer binds to the replacement base PreQ1. It depends on Zn(2+) as a cofactor.

The enzyme catalyses 7-aminomethyl-7-carbaguanine + guanosine(34) in tRNA = 7-aminomethyl-7-carbaguanosine(34) in tRNA + guanine. The protein operates within tRNA modification; tRNA-queuosine biosynthesis. In terms of biological role, catalyzes the base-exchange of a guanine (G) residue with the queuine precursor 7-aminomethyl-7-deazaguanine (PreQ1) at position 34 (anticodon wobble position) in tRNAs with GU(N) anticodons (tRNA-Asp, -Asn, -His and -Tyr). Catalysis occurs through a double-displacement mechanism. The nucleophile active site attacks the C1' of nucleotide 34 to detach the guanine base from the RNA, forming a covalent enzyme-RNA intermediate. The proton acceptor active site deprotonates the incoming PreQ1, allowing a nucleophilic attack on the C1' of the ribose to form the product. After dissociation, two additional enzymatic reactions on the tRNA convert PreQ1 to queuine (Q), resulting in the hypermodified nucleoside queuosine (7-(((4,5-cis-dihydroxy-2-cyclopenten-1-yl)amino)methyl)-7-deazaguanosine). In Neisseria meningitidis serogroup C (strain 053442), this protein is Queuine tRNA-ribosyltransferase.